Reading from the N-terminus, the 1290-residue chain is Alpha-factor-transporting ATPase (1290 aa).

The Cytoplasmic portion of the chain corresponds to 1–25; the sequence is MNFLSFKTTKHYHIFRYVNIRNDYR. Residues 26–46 form a helical membrane-spanning segment; that stretch reads LLMIMIIGTVATGLVPAITSI. The ABC transmembrane type-1 1 domain occupies 27–319; sequence LMIMIIGTVA…TLHQIVVLQK (293 aa). At 47 to 75 the chain is on the extracellular side; it reads LTGRVFDLLSVFVANGSHQGLYSQLVQRS. Asparagine 61 carries N-linked (GlcNAc...) asparagine glycosylation. A helical transmembrane segment spans residues 76–96; that stretch reads MAVMALGAASVPVMWLSLTSW. The Cytoplasmic segment spans residues 97–150; it reads MHIGERQGFRIRSQILEAYLEEKPMEWYDNNEKLLGDFTQINRCVEELRSSSAE. A helical transmembrane segment spans residues 151–171; that stretch reads ASAITFQNLVAICALLGTSFY. Residues 172 to 173 are Extracellular-facing; it reads YS. Residues 174–194 traverse the membrane as a helical segment; sequence WSLTLIILCSSPIITFFAVVF. Topologically, residues 195–262 are cytoplasmic; it reads SRMIHVYSEK…SCFFVAANAG (68 aa). A helical membrane pass occupies residues 263–283; sequence ILRFLTLTMFVQGFWFGSAMI. Topologically, residues 284-296 are extracellular; that stretch reads KKGKLNINDVITC. Residues 297 to 317 traverse the membrane as a helical segment; the sequence is FHSCIMLGSTLNNTLHQIVVL. Over 318–715 the chain is Cytoplasmic; the sequence is QKGGVAMEKI…RMIKSIRYKK (398 aa). The ABC transporter 1 domain occupies 357-603; sequence LTFANVSFSY…PTTTFSTWYH (247 aa). ATP is bound at residue 392 to 399; that stretch reads GKSGSGKS. A helical transmembrane segment spans residues 716–736; the sequence is ILILGLLCSLIAGATNPVFSY. One can recognise an ABC transmembrane type-1 2 domain in the interval 717–1007; the sequence is LILGLLCSLI…LVSQIPDISR (291 aa). Residues 737 to 763 are Extracellular-facing; that stretch reads TFSFLLEGIVPSTDGKTGSSHYLAKWS. The helical transmembrane segment at 764–784 threads the bilayer; that stretch reads LLVLGVAAADGIFNFAKGFLL. Residues 785–838 are Cytoplasmic-facing; sequence DCCSEYWVMDLRNEVMEKLTRKNMDWFSGENNKASEISALVLNDLRDLRSLVSE. The helical transmembrane segment at 839 to 859 threads the bilayer; sequence FLSAMTSFVTVSTIGLIWALV. Over 860–865 the chain is Extracellular; that stretch reads SGWKLS. The chain crosses the membrane as a helical span at residues 866 to 886; it reads LVCISMFPLIIIFSAIYGGIL. At 887-945 the chain is on the cytoplasmic side; sequence QKCETDYKTSVAQLENCLYQIVTNIKTIKCLQAEFHFQLTYHDLKIKMQQIASKRAIAT. Residues 946-966 traverse the membrane as a helical segment; sequence GFGISMTNMIVMCIQAIIYYY. At 967–981 the chain is on the extracellular side; sequence GLKLVMIHEYTSKEM. The helical transmembrane segment at 982-1002 threads the bilayer; it reads FTTFTLLLFTIMSCTSLVSQI. Residues 1003 to 1290 are Cytoplasmic-facing; it reads PDISRGQRAA…LFQIVSNQSS (288 aa). Lysine 1022 participates in a covalent cross-link: Glycyl lysine isopeptide (Lys-Gly) (interchain with G-Cter in ubiquitin). The ABC transporter 2 domain maps to 1052-1287; sequence VSIQNLTFAY…RGELFQIVSN (236 aa). 1087–1094 lines the ATP pocket; the sequence is GESGTGKS.

Belongs to the ABC transporter superfamily. Alpha-factor sex pheromone exporter (TC 3.A.1.206) family. Post-translationally, degraded via the ubiquitin system.

Its subcellular location is the membrane. The catalysed reaction is an [alpha-factor](in) + ATP + H2O = an [alpha-factor](out) + ADP + phosphate + H(+). Functionally, STE6 is required in yeast MATA cells for production of A-factor pheromone. STE6 is involved in the transport of the farnesyl-derivation of the A-factor pheromone. This Saccharomyces cerevisiae (strain ATCC 204508 / S288c) (Baker's yeast) protein is Alpha-factor-transporting ATPase (STE6).